The chain runs to 604 residues: Arginine--tRNA ligase (604 aa).

The 'HIGH' region signature appears at 142-152; that stretch reads PNIAKEMHVGH.

Belongs to the class-I aminoacyl-tRNA synthetase family. In terms of assembly, monomer.

It localises to the cytoplasm. It carries out the reaction tRNA(Arg) + L-arginine + ATP = L-arginyl-tRNA(Arg) + AMP + diphosphate. This chain is Arginine--tRNA ligase, found in Prochlorococcus marinus (strain MIT 9312).